A 295-amino-acid chain; its full sequence is Protease HtpX homolog (295 aa).

A run of 2 helical transmembrane segments spans residues 6 to 26 and 40 to 60; these read IGLF…VTSV and LSSL…VSLL. Histidine 148 contributes to the Zn(2+) binding site. Residue glutamate 149 is part of the active site. Histidine 152 contributes to the Zn(2+) binding site. A run of 2 helical transmembrane segments spans residues 163–183 and 198–218; these read LIQG…SYAL and ISNI…VAYF. Glutamate 223 serves as a coordination point for Zn(2+).

Belongs to the peptidase M48B family. Zn(2+) serves as cofactor.

Its subcellular location is the cell inner membrane. In Leptospira borgpetersenii serovar Hardjo-bovis (strain JB197), this protein is Protease HtpX homolog.